The primary structure comprises 467 residues: MATEYALRMGDGKRVFLTKEKILEELEAGMANASDLGEIPDLSADEIDKLAEILMMPGKAVSVEQGMEVPVTHDIGTIRLDGDQGNSGVGIPSSRLVGCMTHERAFGADTMELGHIDYSFKPVKPVVSNECQAMEVCQQNMIIPLFYGAMPNMGLYYTPDGPFENPGDLMKAFKIQEAWESMEHAAEHLTRDTVWVMQKLFASGTDGVNFDTTAAAGDADMYGTLHAIEALRKEFPDMYIEAGMAGECVLGMHGNLQYDGVTLAGLWPHQQAPLVAKAGANVFGPVCNTNTSKTSAWNLARAVNFMKAAVQASPIPCHVDMGMGVGGIPMLETPPVDAVTRASKAMVEVAGVDGIOIGVGDPLGMPISHIMASGMTGIRAAGDLVARMQFSKNMRIGEAKEYVAKKLNVDVMDLADEHVMRELREELDIGVITSVPGAAKGIAAKMNIEKLLDIKINSCNLFRKQIQ.

Position 356 (Pyl-356) is a non-standard amino acid, pyrrolysine.

This sequence belongs to the dimethylamine methyltransferase family.

It carries out the reaction Co(I)-[dimethylamine-specific corrinoid protein] + dimethylamine + H(+) = methyl-Co(III)-[dimethylamine-specific corrinoid protein] + methylamine. The protein operates within one-carbon metabolism; methanogenesis from dimethylamine. In terms of biological role, catalyzes the transfer of a methyl group from dimethylamine to the corrinoid cofactor of MtbC. The polypeptide is Dimethylamine methyltransferase MtbB1 (mtbB1) (Methanosarcina acetivorans (strain ATCC 35395 / DSM 2834 / JCM 12185 / C2A)).